Consider the following 131-residue polypeptide: MAINIIAQLEQEESARLLAARAIPDFRPGDTLRVNVKIKEGERERVQAYEGVCIARAGTGVHESFTVRKISFGEGVERLFPLLSPSIESIEVKRRGVVRRAKLYYLRDRRGKSARIAERAGGPKASASTEA.

The disordered stretch occupies residues 112–131 (KSARIAERAGGPKASASTEA).

This sequence belongs to the bacterial ribosomal protein bL19 family.

In terms of biological role, this protein is located at the 30S-50S ribosomal subunit interface and may play a role in the structure and function of the aminoacyl-tRNA binding site. The sequence is that of Large ribosomal subunit protein bL19 from Caulobacter vibrioides (strain ATCC 19089 / CIP 103742 / CB 15) (Caulobacter crescentus).